A 203-amino-acid polypeptide reads, in one-letter code: Guanylate kinase (203 aa).

Residues 3-181 (GTLYIVAAPS…AVSEMCAIFT (179 aa)) enclose the Guanylate kinase-like domain. 10 to 17 (APSGAGKS) is a binding site for ATP.

The protein belongs to the guanylate kinase family.

It is found in the cytoplasm. It carries out the reaction GMP + ATP = GDP + ADP. In terms of biological role, essential for recycling GMP and indirectly, cGMP. The polypeptide is Guanylate kinase (Xanthomonas oryzae pv. oryzae (strain MAFF 311018)).